A 243-amino-acid chain; its full sequence is DNA repair protein RecO (243 aa).

This sequence belongs to the RecO family.

Involved in DNA repair and RecF pathway recombination. This Chlamydia trachomatis serovar L2 (strain ATCC VR-902B / DSM 19102 / 434/Bu) protein is DNA repair protein RecO.